A 679-amino-acid polypeptide reads, in one-letter code: UvrABC system protein B (679 aa).

In terms of domain architecture, Helicase ATP-binding spans 31-414 (ENLTDGLAHQ…ELEKSGTEII (384 aa)). ATP is bound at residue 44 to 51 (GVTGSGKT). The Beta-hairpin motif lies at 97-120 (YYDYYQPEAYVPSSDTFIEKDASI). Residues 436 to 589 (QVDDLLSEAR…QIKYNEEHGI (154 aa)) enclose the Helicase C-terminal domain. The UVR domain occupies 639 to 674 (QQQIKKLEQQMYKFAQDLEFEKAAAIRDQLHQLREQ).

This sequence belongs to the UvrB family. In terms of assembly, forms a heterotetramer with UvrA during the search for lesions. Interacts with UvrC in an incision complex.

It is found in the cytoplasm. Functionally, the UvrABC repair system catalyzes the recognition and processing of DNA lesions. A damage recognition complex composed of 2 UvrA and 2 UvrB subunits scans DNA for abnormalities. Upon binding of the UvrA(2)B(2) complex to a putative damaged site, the DNA wraps around one UvrB monomer. DNA wrap is dependent on ATP binding by UvrB and probably causes local melting of the DNA helix, facilitating insertion of UvrB beta-hairpin between the DNA strands. Then UvrB probes one DNA strand for the presence of a lesion. If a lesion is found the UvrA subunits dissociate and the UvrB-DNA preincision complex is formed. This complex is subsequently bound by UvrC and the second UvrB is released. If no lesion is found, the DNA wraps around the other UvrB subunit that will check the other stand for damage. The chain is UvrABC system protein B from Haemophilus influenzae (strain 86-028NP).